The primary structure comprises 506 residues: Bone morphogenetic protein 6 (506 aa).

The signal sequence occupies residues 1-20 (MPGLGRRAQWLCWWWGLLCS). Positions 21-367 (CGPPPLRPPL…VSEVHVRTTR (347 aa)) are excised as a propeptide. Disordered stretches follow at residues 44 to 64 (AGGS…SGFL), 87 to 125 (PHRP…RLKS), and 139 to 195 (KDDE…PLTS). Low complexity predominate over residues 96 to 112 (LQQPQSPVLPQQQQSQQ). Positions 140 to 153 (DDEEDGVSEGEGLE) are enriched in acidic residues. 5 N-linked (GlcNAc...) asparagine glycosylation sites follow: N234, N262, N379, N397, and N447. The tract at residues 366–397 (TRSASSRRRQQSRNRSTQSQDVSRGSSASDYN) is disordered. Over residues 386–397 (DVSRGSSASDYN) the composition is skewed to polar residues. Disulfide bonds link C405/C471, C434/C503, and C438/C505.

The protein belongs to the TGF-beta family. As to quaternary structure, interacts with SOSTDC1. Interacts (when glycosylated) with type I receptor ACVR1; the interaction may induce HAMP expression. Interacts with type II receptor ACVR2B. Interacts with Hemojuvelin/HJV. Interacts with ERFE; the interaction inhibits BMP-induced transcription of HAMP. Interacts with BMPR1A/ALK3. Forms heterodimers with BMP2 in vitro; the heterodimer then binds to its receptor BMPR1A /ALK3 and may induce HAMP expression.

It is found in the secreted. Its function is as follows. Growth factor of the TGF-beta superfamily that plays essential roles in many developmental processes including cartilage and bone formation. Also plays an important role in the regulation of HAMP/hepcidin expression and iron metabolism by acting as a ligand for hemojuvelin/HJV. Also acts to promote expression of HAMP, potentially via the interaction with its receptor BMPR1A/ALK3. Initiates the canonical BMP signaling cascade by associating with type I receptor ACVR1 and type II receptor ACVR2B. In turn, ACVR1 propagates signal by phosphorylating SMAD1/5/8 that travel to the nucleus and act as activators and repressors of transcription of target. Can also signal through non-canonical pathway such as TAZ-Hippo signaling cascade to modulate VEGF signaling by regulating VEGFR2 expression. The polypeptide is Bone morphogenetic protein 6 (Bmp6) (Rattus norvegicus (Rat)).